The following is a 475-amino-acid chain: tRNA-2-methylthio-N(6)-dimethylallyladenosine synthase (475 aa).

Residues 1–21 (MTTAPTSPALPASSDTAPTGP) form a disordered region. The 122-residue stretch at 24 to 145 (RGLHVITWGC…LPEMVARAAR (122 aa)) folds into the MTTase N-terminal domain. Cysteine 33, cysteine 69, cysteine 108, cysteine 186, cysteine 190, and cysteine 193 together coordinate [4Fe-4S] cluster. Positions 172–404 (TQGNLTAFLT…QALLREQQDA (233 aa)) constitute a Radical SAM core domain. Residues 407-469 (ADMVGTVQEI…TNSLGGTLIR (63 aa)) form the TRAM domain.

It belongs to the methylthiotransferase family. MiaB subfamily. As to quaternary structure, monomer. [4Fe-4S] cluster is required as a cofactor.

The protein resides in the cytoplasm. It catalyses the reaction N(6)-dimethylallyladenosine(37) in tRNA + (sulfur carrier)-SH + AH2 + 2 S-adenosyl-L-methionine = 2-methylsulfanyl-N(6)-dimethylallyladenosine(37) in tRNA + (sulfur carrier)-H + 5'-deoxyadenosine + L-methionine + A + S-adenosyl-L-homocysteine + 2 H(+). Catalyzes the methylthiolation of N6-(dimethylallyl)adenosine (i(6)A), leading to the formation of 2-methylthio-N6-(dimethylallyl)adenosine (ms(2)i(6)A) at position 37 in tRNAs that read codons beginning with uridine. The polypeptide is tRNA-2-methylthio-N(6)-dimethylallyladenosine synthase (Gluconobacter oxydans (strain 621H) (Gluconobacter suboxydans)).